We begin with the raw amino-acid sequence, 190 residues long: Putative 3-methyladenine DNA glycosylase (190 aa).

This sequence belongs to the DNA glycosylase MPG family.

This is Putative 3-methyladenine DNA glycosylase from Chlamydia abortus (strain DSM 27085 / S26/3) (Chlamydophila abortus).